Here is a 758-residue protein sequence, read N- to C-terminus: UPF0313 protein CV_1738 (758 aa).

Residues 377–642 (AWEMIKYSVN…VDVVRDGYRR (266 aa)) form the Radical SAM core domain. The [4Fe-4S] cluster site is built by Cys391, Cys395, and Cys398. The tract at residues 698-758 (GAPMNRGKSP…KPGGKTSRSR (61 aa)) is disordered. A compositionally biased stretch (gly residues) spans 727 to 737 (RGQGGQGGRPG).

This sequence belongs to the UPF0313 family. The cofactor is [4Fe-4S] cluster.

This chain is UPF0313 protein CV_1738, found in Chromobacterium violaceum (strain ATCC 12472 / DSM 30191 / JCM 1249 / CCUG 213 / NBRC 12614 / NCIMB 9131 / NCTC 9757 / MK).